The following is a 187-amino-acid chain: Small monomeric GTPase RhbA (187 aa).

GDP contacts are provided by serine 17, valine 18, glycine 19, lysine 20, serine 21, serine 22, valine 33, and glutamate 34. Serine 17 serves as a coordination point for GTP. 5 residues coordinate GTP: glycine 19, lysine 20, serine 21, serine 22, and valine 33. Serine 21 contacts Mg(2+). The GTP site is built by tyrosine 36, threonine 39, asparagine 120, aspartate 123, and alanine 152. The short motif at 36-44 (YYPTIENTF) is the Effector region element. Threonine 39 is a Mg(2+) binding site. GDP is bound by residues asparagine 120, aspartate 123, and alanine 152. Cysteine 184 is lipidated: S-farnesyl cysteine.

This sequence belongs to the small GTPase superfamily. Rheb family. Post-translationally, farnesylation is important for efficiently activating mTORC1-mediated signaling.

It localises to the cell membrane. It carries out the reaction GTP + H2O = GDP + phosphate + H(+). Alternates between an inactive form bound to GDP and an active form bound to GTP. Functionally, small GTPase that acts as an allosteric activator of the canonical TOR pathway, an evolutionarily conserved central nutrient sensor that stimulates anabolic reactions and macromolecule biosynthesis to promote cellular biomass generation and growth. Plays a role in virulence. The protein is Small monomeric GTPase RhbA of Aspergillus fumigatus (strain ATCC MYA-4609 / CBS 101355 / FGSC A1100 / Af293) (Neosartorya fumigata).